Consider the following 687-residue polypeptide: Glycine--tRNA ligase beta subunit (687 aa).

Belongs to the class-II aminoacyl-tRNA synthetase family. In terms of assembly, tetramer of two alpha and two beta subunits.

It localises to the cytoplasm. The enzyme catalyses tRNA(Gly) + glycine + ATP = glycyl-tRNA(Gly) + AMP + diphosphate. This chain is Glycine--tRNA ligase beta subunit, found in Lactobacillus helveticus (strain DPC 4571).